The following is a 296-amino-acid chain: Urease operon transcriptional activator (296 aa).

The 98-residue stretch at 171 to 268 (QAITHLITQE…NMTPSQFRLQ (98 aa)) folds into the HTH araC/xylS-type domain. 2 DNA-binding regions (H-T-H motif) span residues 188–209 (DDVAKALFTTPSTLRRHLNREG) and 235–258 (VFQISHRCGFGSNAYFCDVFKRKY).

In terms of biological role, positive regulator of the expression of the urease operon. This Escherichia coli protein is Urease operon transcriptional activator (ureR).